The chain runs to 476 residues: Xylan O-acetyltransferase 4 (476 aa).

The tract at residues 1-37 is disordered; the sequence is MTKPQQQSPPSTTATTTTSPPPPPPSTPPPASSSSSS. The Cytoplasmic portion of the chain corresponds to 1–63; that stretch reads MTKPQQQSPP…SLLSALRRSP (63 aa). Low complexity predominate over residues 8–18; sequence SPPSTTATTTT. Over residues 19–31 the composition is skewed to pro residues; sequence SPPPPPPSTPPPA. A helical; Signal-anchor for type II membrane protein transmembrane segment spans residues 64–80; it reads VTTLVAAFFLLALFMYG. Residues 81–476 lie on the Lumenal side of the membrane; it reads EDVRTLAELS…PSPHPPLPPQ (396 aa). Asn-103, Asn-128, and Asn-167 each carry an N-linked (GlcNAc...) asparagine glycan. 4 cysteine pairs are disulfide-bonded: Cys-117-Cys-168, Cys-139-Cys-204, Cys-148-Cys-444, and Cys-360-Cys-440. The GDS motif signature appears at 191–193; the sequence is GDS. Ser-193 functions as the Nucleophile in the catalytic mechanism. Asn-299 and Asn-369 each carry an N-linked (GlcNAc...) asparagine glycan. Asp-439 serves as the catalytic Proton donor. The DXXH motif signature appears at 439 to 442; that stretch reads DCIH. His-442 (proton acceptor) is an active-site residue.

This sequence belongs to the PC-esterase family. TBL subfamily. In terms of tissue distribution, highly expressed in leaves. Expressed in roots, stems and inflorescences.

The protein resides in the golgi apparatus membrane. Its function is as follows. Xylan acetyltransferase required for 2-O- and 3-O-monoacetylation of xylosyl residues in xylan. Catalyzes the 2-O-acetylation of xylan, followed by nonenzymatic acetyl migration to the O-3 position, resulting in products that are monoacetylated at both O-2 and O-3 positions. The protein is Xylan O-acetyltransferase 4 of Oryza sativa subsp. japonica (Rice).